A 321-amino-acid polypeptide reads, in one-letter code: ATP-dependent 6-phosphofructokinase (321 aa).

Glycine 12 provides a ligand contact to ATP. ADP contacts are provided by residues 22–26 (RAVVR) and 55–60 (RYSVSD). ATP is bound by residues 73 to 74 (RF) and 103 to 106 (GDGS). Aspartate 104 lines the Mg(2+) pocket. 127-129 (TID) serves as a coordination point for substrate. The active-site Proton acceptor is the aspartate 129. An ADP-binding site is contributed by arginine 156. Substrate is bound by residues arginine 164 and 171–173 (MGR). ADP contacts are provided by residues 187-189 (GCE) and 215-217 (KRH). Substrate contacts are provided by residues glutamate 224, arginine 245, and 251–254 (HVQR).

Belongs to the phosphofructokinase type A (PFKA) family. ATP-dependent PFK group I subfamily. Prokaryotic clade 'B1' sub-subfamily. As to quaternary structure, homotetramer. Requires Mg(2+) as cofactor.

Its subcellular location is the cytoplasm. The catalysed reaction is beta-D-fructose 6-phosphate + ATP = beta-D-fructose 1,6-bisphosphate + ADP + H(+). The protein operates within carbohydrate degradation; glycolysis; D-glyceraldehyde 3-phosphate and glycerone phosphate from D-glucose: step 3/4. Its activity is regulated as follows. Allosterically activated by ADP and other diphosphonucleosides, and allosterically inhibited by phosphoenolpyruvate. Its function is as follows. Catalyzes the phosphorylation of D-fructose 6-phosphate to fructose 1,6-bisphosphate by ATP, the first committing step of glycolysis. In Actinobacillus succinogenes (strain ATCC 55618 / DSM 22257 / CCUG 43843 / 130Z), this protein is ATP-dependent 6-phosphofructokinase.